The following is a 246-amino-acid chain: Putative S-adenosyl-L-methionine-dependent methyltransferase Mflv_0168 (246 aa).

S-adenosyl-L-methionine-binding positions include Asp-112 and Asp-141–Leu-142.

It belongs to the UPF0677 family.

In terms of biological role, exhibits S-adenosyl-L-methionine-dependent methyltransferase activity. In Mycolicibacterium gilvum (strain PYR-GCK) (Mycobacterium gilvum (strain PYR-GCK)), this protein is Putative S-adenosyl-L-methionine-dependent methyltransferase Mflv_0168.